We begin with the raw amino-acid sequence, 550 residues long: MAAKDVVFGGEARARMVEGVNILANAVKVTLGPKGRNVVLERSFGAPTVTKDGVSVAKEIELKDKLQNMGAQLVKEVASKTSDNAGDGTTTATVLAQAIVREGFKYVAAGINPMDLKRGIDKAVTALVEELKKASKPTTTSKEIAQVGSISANSDETIGKLIADAMDKVGKEGVITVEDGKSLDSELDVVEGMQFDRGYLSPYFINNPEKQSALLDNPFVLLFDKKISNIRDLLPTLEQVAKAGRPLLIIAEEVEGEALATLVVNTIRGILKVVAVKAPGFGDRRKAMLEDIAILTGGKVIAEEVGLTLEKVTLADLGQAKRIEVGKENTIIIDGSGAAADIEARVKQVRVQIEEATSDYDREKLQERVAKLAGGVAVIKVGAATEVEMKEKKARVEDALHATRAAVEEGVVAGGGVALLRAKQAVGDKVKGDNADQDAGIKLVLKAIEAPLREIVNNAGGEASVVVNAVLAGKGNYGFNAANDTYGDMLELGILDPTKVTRTALQNAASVASLLLTTEAMVADAPKEEAGAGGGMPDMGGMGGMGGMGM.

ATP is bound by residues 30-33 (TLGP), Lys51, 87-91 (DGTTT), Gly415, 480-482 (NAA), and Asp496.

This sequence belongs to the chaperonin (HSP60) family. As to quaternary structure, forms a cylinder of 14 subunits composed of two heptameric rings stacked back-to-back. Interacts with the co-chaperonin GroES.

The protein localises to the cytoplasm. It carries out the reaction ATP + H2O + a folded polypeptide = ADP + phosphate + an unfolded polypeptide.. Together with its co-chaperonin GroES, plays an essential role in assisting protein folding. The GroEL-GroES system forms a nano-cage that allows encapsulation of the non-native substrate proteins and provides a physical environment optimized to promote and accelerate protein folding. The sequence is that of Chaperonin GroEL from Variovorax paradoxus (strain S110).